The primary structure comprises 131 residues: MNKSLIFLLSFAYSCYSTKTENNFDINDVENKACQYGCGFENVRRTSFRKTYDILYTCSECSTLFDLCIKYRTCQDGCVPEMPVLPYDQAKDVSARIRPPMNPCLDLVTACNYESMDSYEILRSENPFLYI.

A signal peptide spans 1–17 (MNKSLIFLLSFAYSCYS).

Functionally, required for spermiogenesis. This is Spermatocyte protein spe-27 (spe-27) from Caenorhabditis elegans.